Consider the following 120-residue polypeptide: Urease subunit beta (120 aa).

This sequence belongs to the urease beta subunit family. As to quaternary structure, heterotrimer of UreA (gamma), UreB (beta) and UreC (alpha) subunits. Three heterotrimers associate to form the active enzyme.

It localises to the cytoplasm. The enzyme catalyses urea + 2 H2O + H(+) = hydrogencarbonate + 2 NH4(+). The protein operates within nitrogen metabolism; urea degradation; CO(2) and NH(3) from urea (urease route): step 1/1. This Corynebacterium efficiens (strain DSM 44549 / YS-314 / AJ 12310 / JCM 11189 / NBRC 100395) protein is Urease subunit beta.